Reading from the N-terminus, the 463-residue chain is Interleukin enhancer-binding factor 2 (463 aa).

At arginine 94 the chain carries Asymmetric dimethylarginine; alternate. Arginine 94 is modified (omega-N-methylarginine; alternate). Residues 108–444 (RHILAYDWLA…PEKKEGEEEE (337 aa)) enclose the DZF domain. Omega-N-methylarginine is present on arginine 145. Lysine 166 participates in a covalent cross-link: Glycyl lysine isopeptide (Lys-Gly) (interchain with G-Cter in ubiquitin). Serine 173 and serine 189 each carry phosphoserine. Residues lysine 259 and lysine 437 each participate in a glycyl lysine isopeptide (Lys-Gly) (interchain with G-Cter in SUMO2) cross-link. The tract at residues 424–463 (VTPSEKAYEKPPEKKEGEEEEENTEEPPQGEEEESMETQE) is disordered. Over residues 429–440 (KAYEKPPEKKEG) the composition is skewed to basic and acidic residues. Over residues 441–463 (EEEEENTEEPPQGEEEESMETQE) the composition is skewed to acidic residues. Threonine 461 carries the phosphothreonine modification.

As to quaternary structure, forms heterodimers with ILF3. ILF2-ILF3 heterodimers may also bind to PRKDC/XRCC7: this may stabilize the interaction of PRKDC/XRCC7 and the heterodimeric complex of G22P1/KU70 and XRCC5/KU80. Forms a complex with ILF3, YLPM1, KHDRBS1, RBMX, NCOA5 and PPP1CA. Identified in a IGF2BP1-dependent mRNP granule complex containing untranslated mRNAs. Interacts with IGF2BP1. Interacts with CRBN; this interaction promotes ubiquitination and subsequent degradation of ILF2. Post-translationally, ubiquitinated at Lys-166 by CRBN with polyubiquitin chains by the CUL4-RING E3 ligase (CRL4-CRBN) and then degraded by the proteasome.

Its subcellular location is the nucleus. It localises to the nucleolus. The protein resides in the cytoplasm. Functionally, chromatin-interacting protein that forms a stable heterodimer with interleukin enhancer-binding factor 3/ILF3 and plays a role in several biological processes including transcription, innate immunity or cell growth. Essential for the efficient reshuttling of ILF3 (isoform 1 and isoform 2) into the nucleus. Together with ILF3, forms an RNA-binding complex that is required for mitotic progression and cytokinesis by regulating the expression of a cluster of mitotic genes. Mechanistically, competes with STAU1/STAU2-mediated mRNA decay. Plays also a role in the inhibition of various viruses including Japanese encephalitis virus or enterovirus 71. The polypeptide is Interleukin enhancer-binding factor 2 (Ilf2) (Rattus norvegicus (Rat)).